An 87-amino-acid chain; its full sequence is Large ribosomal subunit protein bL27 (87 aa).

This sequence belongs to the bacterial ribosomal protein bL27 family.

The polypeptide is Large ribosomal subunit protein bL27 (Renibacterium salmoninarum (strain ATCC 33209 / DSM 20767 / JCM 11484 / NBRC 15589 / NCIMB 2235)).